Reading from the N-terminus, the 177-residue chain is UPF0251 protein Cag_0886 (177 aa).

A disordered region spans residues 147 to 177 (GGCLSDEESDEQENEQRTVGYPESEEELEIE).

This sequence belongs to the UPF0251 family.

The sequence is that of UPF0251 protein Cag_0886 from Chlorobium chlorochromatii (strain CaD3).